The chain runs to 541 residues: 2-succinyl-5-enolpyruvyl-6-hydroxy-3-cyclohexene-1-carboxylate synthase (541 aa).

This sequence belongs to the TPP enzyme family. MenD subfamily. In terms of assembly, homodimer. Mg(2+) is required as a cofactor. The cofactor is Mn(2+). Requires thiamine diphosphate as cofactor.

The catalysed reaction is isochorismate + 2-oxoglutarate + H(+) = 5-enolpyruvoyl-6-hydroxy-2-succinyl-cyclohex-3-ene-1-carboxylate + CO2. It participates in quinol/quinone metabolism; 1,4-dihydroxy-2-naphthoate biosynthesis; 1,4-dihydroxy-2-naphthoate from chorismate: step 2/7. It functions in the pathway quinol/quinone metabolism; menaquinone biosynthesis. Catalyzes the thiamine diphosphate-dependent decarboxylation of 2-oxoglutarate and the subsequent addition of the resulting succinic semialdehyde-thiamine pyrophosphate anion to isochorismate to yield 2-succinyl-5-enolpyruvyl-6-hydroxy-3-cyclohexene-1-carboxylate (SEPHCHC). The sequence is that of 2-succinyl-5-enolpyruvyl-6-hydroxy-3-cyclohexene-1-carboxylate synthase from Leuconostoc citreum (strain KM20).